The sequence spans 144 residues: Transcriptional regulator MraZ (144 aa).

2 SpoVT-AbrB domains span residues 6–48 (TYTP…PTDV) and 77–120 (ADEG…DPVR).

The protein belongs to the MraZ family. Forms oligomers.

The protein resides in the cytoplasm. The protein localises to the nucleoid. The protein is Transcriptional regulator MraZ of Nocardioides sp. (strain ATCC BAA-499 / JS614).